The primary structure comprises 316 residues: MSAEVETSEGVDESEKKNSGALEKENQMRMADLSELLKEGTKEAHDRAENTQFVKDFLKGNIKKELFKLATTALYFTYSALEEEMERNKDHPTFAPLYFPMELHRKEALTKDMEYFFGENWEEQVQCPKAAKKYVERIHYIGQNEPELLVAHAYTRYMGDLSGGQVLKKVAQRALKLPSTGEGTQFYLFENVDNAQQFKQLYRARMNALDLNMKTKERIVEEANKAFEYNMQIFNELDQAGSTLARETLEDGFPVHDGKGDMRKCPFYAGEQDKGALEGSSCPFRTAMAVLRKPSLQFILAAGMALAAGLLAWYYM.

Positions Met-1–Asp-12 are enriched in acidic residues. The segment at Met-1–Arg-29 is disordered. Ser-2 is modified (N-acetylserine). Ser-2 carries the phosphoserine modification. The segment covering Glu-13–Gln-27 has biased composition (basic and acidic residues). His-45 contacts heme b. HRM repeat units lie at residues Lys-264 to Ala-269 and Ser-281 to Thr-286. Cys-265 and Cys-282 each carry S-nitrosocysteine.

Belongs to the heme oxygenase family. S-nitrosylated by BLVRB.

It is found in the microsome. The protein localises to the endoplasmic reticulum. It catalyses the reaction heme b + 3 reduced [NADPH--hemoprotein reductase] + 3 O2 = biliverdin IXalpha + CO + Fe(2+) + 3 oxidized [NADPH--hemoprotein reductase] + 3 H2O + H(+). Its function is as follows. Heme oxygenase cleaves the heme ring at the alpha methene bridge to form biliverdin. Biliverdin is subsequently converted to bilirubin by biliverdin reductase. Under physiological conditions, the activity of heme oxygenase is highest in the spleen, where senescent erythrocytes are sequestrated and destroyed. Heme oxygenase 2 could be implicated in the production of carbon monoxide in brain where it could act as a neurotransmitter. In Macaca fascicularis (Crab-eating macaque), this protein is Heme oxygenase 2 (HMOX2).